Here is a 221-residue protein sequence, read N- to C-terminus: MGRKRLSDFGNARLACHDVSCLRGDRLLFTHLSFEVKAGEAVLITGANGIGKSSLLRLLAGFLKPFSGHIEKWGRVAFADEALAMDRHLPLEKALAYWAALDGVLGAEKEAMAVMALDILADSPVRLLSTGQRKRAVLARLLASQAAIWLLDEPANGLDAASVRALIEMIEHHRQKGGIILAVSHQGLDMADYKTLSLENFVANSGQSSGFFDLLDESHFS.

In terms of domain architecture, ABC transporter spans 14 to 221; that stretch reads LACHDVSCLR…FDLLDESHFS (208 aa). 46–53 is a binding site for ATP; it reads GANGIGKS.

The protein belongs to the ABC transporter superfamily. CcmA exporter (TC 3.A.1.107) family. In terms of assembly, the complex is composed of two ATP-binding proteins (CcmA) and two transmembrane proteins (CcmB).

The protein resides in the cell inner membrane. The catalysed reaction is heme b(in) + ATP + H2O = heme b(out) + ADP + phosphate + H(+). In terms of biological role, part of the ABC transporter complex CcmAB involved in the biogenesis of c-type cytochromes; once thought to export heme, this seems not to be the case, but its exact role is uncertain. Responsible for energy coupling to the transport system. This Zymomonas mobilis subsp. mobilis (strain ATCC 31821 / ZM4 / CP4) protein is Cytochrome c biogenesis ATP-binding export protein CcmA.